We begin with the raw amino-acid sequence, 644 residues long: Exoribonuclease 2 (644 aa).

Residues 189-516 form the RNB domain; sequence RRDLTALNFV…NHRLLKAIVK (328 aa). One can recognise an S1 motif domain in the interval 561–643; that stretch reads DTRFAAEIID…ETRSIIARPV (83 aa).

This sequence belongs to the RNR ribonuclease family. RNase II subfamily.

Its subcellular location is the cytoplasm. The catalysed reaction is Exonucleolytic cleavage in the 3'- to 5'-direction to yield nucleoside 5'-phosphates.. Involved in mRNA degradation. Hydrolyzes single-stranded polyribonucleotides processively in the 3' to 5' direction. This is Exoribonuclease 2 from Enterobacter sp. (strain 638).